We begin with the raw amino-acid sequence, 220 residues long: Octanoyltransferase (220 aa).

A BPL/LPL catalytic domain is found at 27 to 208 (PGTADEIWLC…QLARAHGQAV (182 aa)). Substrate is bound by residues 66 to 73 (RGGQVTYH), 139 to 141 (ALG), and 152 to 154 (GLA). Cysteine 170 serves as the catalytic Acyl-thioester intermediate.

Belongs to the LipB family.

It localises to the cytoplasm. It catalyses the reaction octanoyl-[ACP] + L-lysyl-[protein] = N(6)-octanoyl-L-lysyl-[protein] + holo-[ACP] + H(+). It participates in protein modification; protein lipoylation via endogenous pathway; protein N(6)-(lipoyl)lysine from octanoyl-[acyl-carrier-protein]: step 1/2. Functionally, catalyzes the transfer of endogenously produced octanoic acid from octanoyl-acyl-carrier-protein onto the lipoyl domains of lipoate-dependent enzymes. Lipoyl-ACP can also act as a substrate although octanoyl-ACP is likely to be the physiological substrate. This is Octanoyltransferase from Bordetella bronchiseptica (strain ATCC BAA-588 / NCTC 13252 / RB50) (Alcaligenes bronchisepticus).